We begin with the raw amino-acid sequence, 227 residues long: Putative ankyrin repeat protein L45 (227 aa).

ANK repeat units follow at residues 38 to 66, 78 to 107, 108 to 137, 139 to 167, 168 to 197, and 199 to 227; these read FETNIIEYVVENNLLDILRHIIFLKNINH, CLEESLNASCKNGKLEIVKLLVDLGANIFH, NENCAMMLASEYGHIEIVEYLVSKGSDVRA, NDYAVIYASKNGHLEIVKYLVSQGCDVRS, CDSYAVRLASEYGHLEIVKFLVKKGANYRA, and NHHAVIEASKNKHYEIVEFLMNYSTGITK.

The sequence is that of Putative ankyrin repeat protein L45 from Acanthamoeba polyphaga mimivirus (APMV).